The sequence spans 401 residues: Argininosuccinate synthase (401 aa).

ATP is bound at residue 9–17; sequence AYSGGLDTS. Residue Y86 coordinates L-citrulline. An ATP-binding site is contributed by G116. L-aspartate contacts are provided by T118, N122, and D123. N122 lines the L-citrulline pocket. 5 residues coordinate L-citrulline: R126, S174, S183, E259, and Y271.

This sequence belongs to the argininosuccinate synthase family. Type 1 subfamily. In terms of assembly, homotetramer.

The protein resides in the cytoplasm. It carries out the reaction L-citrulline + L-aspartate + ATP = 2-(N(omega)-L-arginino)succinate + AMP + diphosphate + H(+). Its pathway is amino-acid biosynthesis; L-arginine biosynthesis; L-arginine from L-ornithine and carbamoyl phosphate: step 2/3. The polypeptide is Argininosuccinate synthase (Bacillus mycoides (strain KBAB4) (Bacillus weihenstephanensis)).